Consider the following 275-residue polypeptide: 4-diphosphocytidyl-2-C-methyl-D-erythritol kinase (275 aa).

Lysine 14 is an active-site residue. 94-104 (PMEAGLGGGSA) lines the ATP pocket. Aspartate 134 is a catalytic residue.

Belongs to the GHMP kinase family. IspE subfamily.

The enzyme catalyses 4-CDP-2-C-methyl-D-erythritol + ATP = 4-CDP-2-C-methyl-D-erythritol 2-phosphate + ADP + H(+). Its pathway is isoprenoid biosynthesis; isopentenyl diphosphate biosynthesis via DXP pathway; isopentenyl diphosphate from 1-deoxy-D-xylulose 5-phosphate: step 3/6. In terms of biological role, catalyzes the phosphorylation of the position 2 hydroxy group of 4-diphosphocytidyl-2C-methyl-D-erythritol. The protein is 4-diphosphocytidyl-2-C-methyl-D-erythritol kinase of Thermosipho africanus (strain TCF52B).